We begin with the raw amino-acid sequence, 330 residues long: Uracil-DNA glycosylase, mitochondrial (330 aa).

The transit peptide at 1–49 directs the protein to the mitochondrion; it reads MASSTPKTLMDFFQPAKRLKASPSSSSFPAVSVAGGSRDLGSVANSPPR. Catalysis depends on Asp173, which acts as the Proton acceptor.

This sequence belongs to the uracil-DNA glycosylase (UDG) superfamily. UNG family.

Its subcellular location is the mitochondrion. The enzyme catalyses Hydrolyzes single-stranded DNA or mismatched double-stranded DNA and polynucleotides, releasing free uracil.. Its activity is regulated as follows. Inhidited by the small peptide uracil-DNA-glycosylase inhibitor (Ugi). In terms of biological role, excises uracil residues from the DNA which can arise as a result of misincorporation of dUMP residues by DNA polymerase or due to deamination of cytosine. More active on U:G, U:T and U:C mispairs than on U:A pairs. Highly specific for uracil and no activity with 5-substituted uracil or cytosine derivatives. Required for initiation of base excision repair (BER) of uracil. This is Uracil-DNA glycosylase, mitochondrial from Arabidopsis thaliana (Mouse-ear cress).